The sequence spans 369 residues: MELSYYEILEVEKHSNQETIKKSYRKLALKYHPDRNAGDKEAEEKFKLINEAYGVLGDEKKRALYDRYGKKGLNQAGTSQSDFSDFFEDLGSFFEDAFGFGARGSKRQKSSIAPDYLQMIELSFKEAVFGCKKTIKAQYQSVCESCDGTGAKDKALENCKQCNGQGQVFMRQGFMSFAQTCGACQGKGKIIKTPCQACKGKTYILKDEEIDAIIPEGIDDQNRMVLKNKGNEYEKGKRGDLYLEARVKEDEHFKREGCDLFIKAPVFFTTIALGHTIKVPSLRGDELELKIPRNAKDRQAFAFRNEGVKHPESSYRGSLIVELQVIYPKSLNKEQQGLLEKLHASFGYEGEPHKSVLETCVSKIKDWFK.

Positions 4–69 constitute a J domain; sequence SYYEILEVEK…KKRALYDRYG (66 aa). The segment at 130-207 adopts a CR-type zinc-finger fold; the sequence is GCKKTIKAQY…CKGKTYILKD (78 aa). Zn(2+)-binding residues include Cys143, Cys146, Cys159, Cys162, Cys181, Cys184, Cys195, and Cys198. CXXCXGXG motif repeat units lie at residues 143 to 150, 159 to 166, 181 to 188, and 195 to 202; these read CESCDGTG, CKQCNGQG, CGACQGKG, and CQACKGKT.

Belongs to the DnaJ family. In terms of assembly, homodimer. It depends on Zn(2+) as a cofactor.

The protein resides in the cytoplasm. Participates actively in the response to hyperosmotic and heat shock by preventing the aggregation of stress-denatured proteins and by disaggregating proteins, also in an autonomous, DnaK-independent fashion. Unfolded proteins bind initially to DnaJ; upon interaction with the DnaJ-bound protein, DnaK hydrolyzes its bound ATP, resulting in the formation of a stable complex. GrpE releases ADP from DnaK; ATP binding to DnaK triggers the release of the substrate protein, thus completing the reaction cycle. Several rounds of ATP-dependent interactions between DnaJ, DnaK and GrpE are required for fully efficient folding. Also involved, together with DnaK and GrpE, in the DNA replication of plasmids through activation of initiation proteins. This Helicobacter pylori (strain J99 / ATCC 700824) (Campylobacter pylori J99) protein is Chaperone protein DnaJ.